The chain runs to 496 residues: Probable cytosol aminopeptidase (496 aa).

Mn(2+)-binding residues include Lys-257 and Asp-262. Lys-269 is an active-site residue. The Mn(2+) site is built by Asp-281, Asp-341, and Glu-343. Arg-345 is an active-site residue.

It belongs to the peptidase M17 family. The cofactor is Mn(2+).

The protein resides in the cytoplasm. It catalyses the reaction Release of an N-terminal amino acid, Xaa-|-Yaa-, in which Xaa is preferably Leu, but may be other amino acids including Pro although not Arg or Lys, and Yaa may be Pro. Amino acid amides and methyl esters are also readily hydrolyzed, but rates on arylamides are exceedingly low.. It carries out the reaction Release of an N-terminal amino acid, preferentially leucine, but not glutamic or aspartic acids.. Its function is as follows. Presumably involved in the processing and regular turnover of intracellular proteins. Catalyzes the removal of unsubstituted N-terminal amino acids from various peptides. This Synechococcus sp. (strain CC9311) protein is Probable cytosol aminopeptidase.